A 302-amino-acid polypeptide reads, in one-letter code: NADH-cytochrome b5 reductase 2 (302 aa).

The propeptide at 1–41 is removed in mature form; the sequence is MFSRLSRSHSKALPIALGTVAIAAATAFYFANRNQHSFVFN. The helical transmembrane segment at 12 to 32 threads the bilayer; it reads ALPIALGTVAIAAATAFYFAN. Positions 51–155 constitute an FAD-binding FR-type domain; the sequence is DKWIDLPISK…KGPIMKWKWQ (105 aa). 158–193 is a binding site for FAD; that stretch reads QFKSITLLGAGTGINPLYQLAHHIVENPNDKTKVNL. S278 bears the Phosphoserine mark.

Belongs to the flavoprotein pyridine nucleotide cytochrome reductase family. The cofactor is FAD. Post-translationally, there are two isoforms of NADH-cytochrome b5 reductase, a 34 kDa form (p34) and a 32 kDa form (p32). The p34 form becomes firmly anchored to the outer mitochondrial membrane after an incomplete translocation arrest. The p32 form is formed after translocation of the p34 precursor to the inner mitochondrial membrane, where it is processed by mitochondrial inner membrane peptidase (IMP) complex and released to the intermembrane space.

It is found in the mitochondrion intermembrane space. Its subcellular location is the mitochondrion outer membrane. The catalysed reaction is 2 Fe(III)-[cytochrome b5] + NADH = 2 Fe(II)-[cytochrome b5] + NAD(+) + H(+). Its function is as follows. The outer membrane form may mediate the reduction of outer membrane cytochrome b5, and the soluble inter-membrane space form may transfer electrons from external NADH to cytochrome c, thereby mediating an antimycin-insensitive, energy-coupled oxidation of external NADH by yeast mitochondria. Involved in the reduction of D-erythroascorbyl free radicals. The chain is NADH-cytochrome b5 reductase 2 (MCR1) from Saccharomyces cerevisiae (strain YJM789) (Baker's yeast).